The chain runs to 501 residues: Zinc finger C3HC-type protein 1 (501 aa).

Ala2 carries the post-translational modification N-acetylalanine. Residues 21–73 (VVRSPEGTPQKVRELIDEGIVPEEGGTEPKDTAATFQSVDGSPQAEQSPLEST) form a disordered region. Phosphoserine is present on Ser24. At Thr28 the chain carries Phosphothreonine. The span at 54 to 72 (ATFQSVDGSPQAEQSPLES) shows a compositional bias: polar residues. Residues Ser58, Ser62, and Ser68 each carry the phosphoserine modification. Thr84 carries the post-translational modification Phosphothreonine. Residues 102-156 (CAKYGWVTVECDMLKCSSCQAFLCASLQPTFDFGRYKERCAELKKSLCSAHEKFC) form a C3HC-type zinc finger. A disordered region spans residues 302–421 (SPIPGVEGRP…TSPRSFFDPT (120 aa)). Phosphoserine is present on residues Ser320 and Ser328. The segment covering 326-338 (TRSQDATVSPGSE) has biased composition (polar residues). Position 332 is a phosphothreonine (Thr332). Residues Ser334, Ser337, Ser343, Ser353, Ser358, Ser369, and Ser380 each carry the phosphoserine modification. Composition is skewed to polar residues over residues 350–359 (RTRSWESSSP) and 369–383 (SPTTRSRPVTRSMGT). Thr383 carries the phosphothreonine modification. Ser394 is subject to Phosphoserine. The Nuclear localization signal signature appears at 395–401 (PLRRTKR). Phosphoserine occurs at positions 406 and 482. The segment covering 406 to 420 (SSSSSDTSPRSFFDP) has biased composition (low complexity).

Interacts with TPR; this interaction mediates ZC3HC1 nuclear envelopes (NE)-association but also required for proper positioning of a substantial amount of TPR at the nuclear basket (NB). In terms of processing, phosphorylated. May also be weakly phosphorylated on Tyr residues.

It is found in the nucleus. It localises to the nucleus envelope. Its function is as follows. Required for proper positioning of a substantial amount of TPR at the nuclear basket (NB) through interaction with TPR. This chain is Zinc finger C3HC-type protein 1 (Zc3hc1), found in Mus musculus (Mouse).